A 406-amino-acid polypeptide reads, in one-letter code: Probable G-protein coupled receptor tkr-1 (406 aa).

The Extracellular portion of the chain corresponds to M1 to A47. The helical transmembrane segment at I48–I68 threads the bilayer. The Cytoplasmic portion of the chain corresponds to Y69–Y76. A helical transmembrane segment spans residues G77 to V97. Residues G98–C115 lie on the Extracellular side of the membrane. The chain crosses the membrane as a helical span at residues T116–L136. At S137–S158 the chain is on the cytoplasmic side. The helical transmembrane segment at V159–A179 threads the bilayer. At A180–P204 the chain is on the extracellular side. A helical transmembrane segment spans residues V205–L225. Topologically, residues G226–M261 are cytoplasmic. A helical transmembrane segment spans residues L262–F282. Over A283–Y297 the chain is Extracellular. The helical transmembrane segment at L298–A318 threads the bilayer. Over N319–R406 the chain is Cytoplasmic.

It belongs to the G-protein coupled receptor 1 family.

The protein localises to the cell membrane. Functionally, not known. Putative receptor. The chain is Probable G-protein coupled receptor tkr-1 (tkr-1) from Caenorhabditis elegans.